A 266-amino-acid polypeptide reads, in one-letter code: Putative carbamate hydrolase RutD (266 aa).

One can recognise an AB hydrolase-1 domain in the interval 14 to 119 (PVVVLSAGLG…LVNGWLSLSP (106 aa)).

The protein belongs to the AB hydrolase superfamily. Hydrolase RutD family.

The enzyme catalyses carbamate + 2 H(+) = NH4(+) + CO2. Its function is as follows. Involved in pyrimidine catabolism. May facilitate the hydrolysis of carbamate, a reaction that can also occur spontaneously. This chain is Putative carbamate hydrolase RutD, found in Klebsiella pneumoniae subsp. pneumoniae (strain ATCC 700721 / MGH 78578).